The chain runs to 123 residues: Small ribosomal subunit protein uS12 (123 aa).

The disordered stretch occupies residues 1–27; that stretch reads MPTIQQLIRKPRQPKIKRSKSMHLQEC. Over residues 9 to 21 the composition is skewed to basic residues; it reads RKPRQPKIKRSKS. 3-methylthioaspartic acid is present on Asp-89.

This sequence belongs to the universal ribosomal protein uS12 family. Part of the 30S ribosomal subunit. Contacts proteins S8 and S17. May interact with IF1 in the 30S initiation complex.

Its function is as follows. With S4 and S5 plays an important role in translational accuracy. Functionally, interacts with and stabilizes bases of the 16S rRNA that are involved in tRNA selection in the A site and with the mRNA backbone. Located at the interface of the 30S and 50S subunits, it traverses the body of the 30S subunit contacting proteins on the other side and probably holding the rRNA structure together. The combined cluster of proteins S8, S12 and S17 appears to hold together the shoulder and platform of the 30S subunit. This Roseobacter denitrificans (strain ATCC 33942 / OCh 114) (Erythrobacter sp. (strain OCh 114)) protein is Small ribosomal subunit protein uS12.